Reading from the N-terminus, the 436-residue chain is G2/mitotic-specific cyclin-B (436 aa).

Residues 1–17 (MSTINNPLNIKTRSHSS) are compositionally biased toward polar residues. Residues 1-33 (MSTINNPLNIKTRSHSSMGGGMIMDENKVPKSS) are disordered.

It belongs to the cyclin family. Cyclin AB subfamily. In terms of assembly, interacts with the cdk1 protein kinase to form a serine/threonine kinase holoenzyme complex also known as maturation promoting factor (MPF). The cyclin subunit imparts substrate specificity to the complex.

In terms of biological role, essential for the control of the cell cycle at the G2/M (mitosis) transition. The sequence is that of G2/mitotic-specific cyclin-B (cycB) from Dictyostelium discoideum (Social amoeba).